The chain runs to 204 residues: MKERGLLIVLSGPSGVGKGTVRQAIFSQEDTKFEYSISVTTRSPREGEVNGVDYFFKTRDEFEQMIADNKLLEWAEYVGNYYGTPVDYVEQTLQDGKDVFLEIEVQGALQVRNAFPEGLFIFLAPPSLSELKNRIVTRGTETDALIENRMKAAKAEIEMMDAYDYVVENDNVETACDKIKAIVLAEHLKRERVAPRYKKMLEVE.

Positions 5-184 (GLLIVLSGPS…ACDKIKAIVL (180 aa)) constitute a Guanylate kinase-like domain. 12–19 (GPSGVGKG) contributes to the ATP binding site.

Belongs to the guanylate kinase family.

It localises to the cytoplasm. The catalysed reaction is GMP + ATP = GDP + ADP. Essential for recycling GMP and indirectly, cGMP. The sequence is that of Guanylate kinase (gmk) from Bacillus subtilis (strain 168).